Consider the following 336-residue polypeptide: Probable long-chain-alcohol O-fatty-acyltransferase 8 (336 aa).

8 consecutive transmembrane segments (helical) span residues 7–27, 38–58, 59–79, 82–102, 117–135, 152–172, 228–248, and 284–304; these read SFVK…YIPS, SVLP…FTIF, SSTT…LFAF, GPLL…CLPI, WVFF…VHNY, LYLV…IILG, MGCW…YFYI, and PMLS…FLFF.

Belongs to the wax synthase family.

Its subcellular location is the membrane. It carries out the reaction a long chain fatty alcohol + a fatty acyl-CoA = a wax ester + CoA. Catalyzes the final step in the synthesis of long-chain linear esters (waxes). The protein is Probable long-chain-alcohol O-fatty-acyltransferase 8 of Arabidopsis thaliana (Mouse-ear cress).